The primary structure comprises 188 residues: Pyridoxal 5'-phosphate synthase subunit PdxT (188 aa).

L-glutamine is bound at residue 46-48 (GES). Cysteine 78 functions as the Nucleophile in the catalytic mechanism. Residues arginine 106 and 132 to 133 (IR) contribute to the L-glutamine site. Active-site charge relay system residues include histidine 169 and glutamate 171.

It belongs to the glutaminase PdxT/SNO family. As to quaternary structure, in the presence of PdxS, forms a dodecamer of heterodimers. Only shows activity in the heterodimer.

The enzyme catalyses aldehydo-D-ribose 5-phosphate + D-glyceraldehyde 3-phosphate + L-glutamine = pyridoxal 5'-phosphate + L-glutamate + phosphate + 3 H2O + H(+). It catalyses the reaction L-glutamine + H2O = L-glutamate + NH4(+). It participates in cofactor biosynthesis; pyridoxal 5'-phosphate biosynthesis. Catalyzes the hydrolysis of glutamine to glutamate and ammonia as part of the biosynthesis of pyridoxal 5'-phosphate. The resulting ammonia molecule is channeled to the active site of PdxS. In Tropheryma whipplei (strain Twist) (Whipple's bacillus), this protein is Pyridoxal 5'-phosphate synthase subunit PdxT.